We begin with the raw amino-acid sequence, 196 residues long: MNVVILDTGCANLNSVKSAIARHGYEPKVSRDPDVVLLADKLFLPGVGTAQAAMDQVRERELFDLIKACTQPVLGICLGMQLLGRRSEESNGVDLLGIIDEDVPKMTDFGLPLPHMGWNRVYPQAGNRLFQGIEDGAYFYFVHSYAMPVNPWTIAQCNYGEPFTAAVQKDNFYGVQFHPERSGAAGAKLLKNFLEM.

Residues 2 to 196 (NVVILDTGCA…AKLLKNFLEM (195 aa)) enclose the Glutamine amidotransferase type-1 domain. Cysteine 77 serves as the catalytic Nucleophile. Residues histidine 178 and glutamate 180 contribute to the active site.

In terms of assembly, heterodimer of HisH and HisF.

The protein localises to the cytoplasm. The catalysed reaction is 5-[(5-phospho-1-deoxy-D-ribulos-1-ylimino)methylamino]-1-(5-phospho-beta-D-ribosyl)imidazole-4-carboxamide + L-glutamine = D-erythro-1-(imidazol-4-yl)glycerol 3-phosphate + 5-amino-1-(5-phospho-beta-D-ribosyl)imidazole-4-carboxamide + L-glutamate + H(+). The enzyme catalyses L-glutamine + H2O = L-glutamate + NH4(+). Its pathway is amino-acid biosynthesis; L-histidine biosynthesis; L-histidine from 5-phospho-alpha-D-ribose 1-diphosphate: step 5/9. IGPS catalyzes the conversion of PRFAR and glutamine to IGP, AICAR and glutamate. The HisH subunit catalyzes the hydrolysis of glutamine to glutamate and ammonia as part of the synthesis of IGP and AICAR. The resulting ammonia molecule is channeled to the active site of HisF. In Shigella dysenteriae serotype 1 (strain Sd197), this protein is Imidazole glycerol phosphate synthase subunit HisH.